Consider the following 782-residue polypeptide: MKHMFKNILFHKKGKHDKNDAIKKAFSLFSVPSNENERIIKFWPLKFKEKDEETLYIIKLCDNMYSKKYVILVSHLISLLLMYSVCLIVGNINDLFSVLKLTYILLHTFTAINIILILTLHATHYVEMFKSIKGEIFIFYIMMIFVIWCSWLFILFNNIKDLLPIVVNVNNFLYATYANNKINIVLGFFAYLPIFYLITIIPCRICYSCAFDILFFIMKVAIFSVYYLITMKSYILTDNIFMIISALVGSLFIFVIRYIIEIQRRLSFHNWNKQTKQIIKLKKTLKEEKQKLSTTNIEEIYNLINDSIGNYYNENKKQKETDWSIVNNLEKILNILKEDNLFSPDLKTINKKNYNHIYGYIMDLKKQKEIINDKIGSKEEPEAESESECVDESKEGSQIESIFESISDVKQKKKSDLAYTSSYEEKENEILKYDFNMNMDKENISIDIWNTKFLDRKSPNYDAFIKIGYILLNKYYISNQNISVKILYSLLYEMKKGYNDVPYHNSIHAAMVTKHCSILITSLDTVNILKDNEMAAFLISALGHDIGHFGRTNMFLKNCSNFLRIIYNDKSILENYHCSYLFNILSKEEHNIFKKEDLKTLTNLRQLIIEVILATDMSKHIKILAQFRIKSIKIKSYIEKNIILCLKMIIKAADLSHNCVDWSEHYLWVKRLVNEFYSEGDDLLERGFELNPLFDRKAHNNFIQIQRTFLRELVLPLISSLKTLDTSTITQLMLSHVKRNYSKWTKIEKDETKKEKYLNELLTDVPNSWKIVYAPNLNIYKL.

At methionine 1–tyrosine 69 the chain is on the cytoplasmic side. A helical membrane pass occupies residues valine 70–glycine 90. The Extracellular portion of the chain corresponds to asparagine 91 to serine 97. The chain crosses the membrane as a helical span at residues valine 98 to leucine 118. Topologically, residues threonine 119–glutamate 135 are cytoplasmic. Residues isoleucine 136–phenylalanine 156 form a helical membrane-spanning segment. The Extracellular portion of the chain corresponds to asparagine 157–lysine 181. Residues isoleucine 182–proline 202 form a helical membrane-spanning segment. The Cytoplasmic portion of the chain corresponds to cysteine 203–serine 208. A helical membrane pass occupies residues cysteine 209 to isoleucine 229. Over threonine 230–asparagine 239 the chain is Extracellular. The helical transmembrane segment at isoleucine 240–isoleucine 260 threads the bilayer. Over glutamate 261–leucine 782 the chain is Cytoplasmic. The disordered stretch occupies residues glycine 376–glycine 396. Over residues proline 381 to valine 390 the composition is skewed to acidic residues. The 329-residue stretch at tyrosine 423 to glutamate 751 folds into the PDEase domain. Residue histidine 504 is the Proton donor of the active site. Histidine 504–histidine 508 is an a nucleoside 3',5'-cyclic phosphate binding site. Positions 508, 544, 545, and 654 each coordinate a divalent metal cation. 3 residues coordinate a nucleoside 3',5'-cyclic phosphate: aspartate 545, aspartate 654, and glutamine 706.

The protein belongs to the cyclic nucleotide phosphodiesterase family. A divalent metal cation is required as a cofactor.

Its subcellular location is the membrane. The protein resides in the endoplasmic reticulum membrane. It catalyses the reaction 3',5'-cyclic GMP + H2O = GMP + H(+). It functions in the pathway purine metabolism; 3',5'-cyclic GMP degradation; GMP from 3',5'-cyclic GMP: step 1/1. Functionally, specifically hydrolyzes the second messenger cGMP, which is a key regulator of many important physiological processes. Probably by regulating cGMP levels, required for sporozoite motility and invasion of the mosquito salivary glands. The protein is cGMP-specific 3',5'-cyclic phosphodiesterase gamma of Plasmodium yoelii.